The primary structure comprises 547 residues: Chaperonin GroEL (547 aa).

ATP is bound by residues T30–P33, K51, D87–T91, G415, N478–A480, and D494.

This sequence belongs to the chaperonin (HSP60) family. In terms of assembly, forms a cylinder of 14 subunits composed of two heptameric rings stacked back-to-back. Interacts with the co-chaperonin GroES.

The protein localises to the cytoplasm. It catalyses the reaction ATP + H2O + a folded polypeptide = ADP + phosphate + an unfolded polypeptide.. Together with its co-chaperonin GroES, plays an essential role in assisting protein folding. The GroEL-GroES system forms a nano-cage that allows encapsulation of the non-native substrate proteins and provides a physical environment optimized to promote and accelerate protein folding. The polypeptide is Chaperonin GroEL (Geobacter sp. (strain M21)).